A 338-amino-acid chain; its full sequence is DNA-directed RNA polymerase subunit alpha (338 aa).

An alpha N-terminal domain (alpha-NTD) region spans residues 1-234 (MIHKNWAELI…DQLGIFVNFE (234 aa)). Positions 250 to 338 (FNPLLLKKVD…DLAKKFEDSF (89 aa)) are alpha C-terminal domain (alpha-CTD).

Belongs to the RNA polymerase alpha chain family. As to quaternary structure, homodimer. The RNAP catalytic core consists of 2 alpha, 1 beta, 1 beta' and 1 omega subunit. When a sigma factor is associated with the core the holoenzyme is formed, which can initiate transcription.

It carries out the reaction RNA(n) + a ribonucleoside 5'-triphosphate = RNA(n+1) + diphosphate. DNA-dependent RNA polymerase catalyzes the transcription of DNA into RNA using the four ribonucleoside triphosphates as substrates. This is DNA-directed RNA polymerase subunit alpha from Roseobacter denitrificans (strain ATCC 33942 / OCh 114) (Erythrobacter sp. (strain OCh 114)).